The sequence spans 247 residues: Lys-63-specific deubiquitinase BRCC36 (247 aa).

At Ala-2 the chain carries N-acetylalanine. In terms of domain architecture, MPN spans 12–179 (VHLESDAFLV…YTCFQSIQAQ (168 aa)). Positions 122, 124, and 135 each coordinate Zn(2+). The short motif at 122-135 (HSHPHITVWPSHVD) is the JAMM motif element. Position 189 is a phosphoserine (Ser-189).

This sequence belongs to the peptidase M67A family. BRCC36 subfamily. As to quaternary structure, component of the ARISC complex, at least composed of UIMC1/RAP80, ABRAXAS1, BRCC3/BRCC36, BABAM2 and BABAM1/NBA1. Component of the BRCA1-A complex, at least composed of BRCA1, BARD1, UIMC1/RAP80, ABRAXAS1, BRCC3/BRCC36, BABAM2 and BABAM1/NBA1. In the BRCA1-A complex, interacts directly with ABRAXAS1 and BABAM2. Component of the BRISC complex, at least composed of ABRAXAS2, BRCC3/BRCC36, BABAM2 and BABAM1/NBA1. Identified in a complex with SHMT2 and the other subunits of the BRISC complex. In the BRISC complex, interacts directly with ABRAXAS2. Identified in a complex with ABRAXAS2 and NUMA1. The BRISC complex interacts with the CSN complex. Component of the BRCA1/BRCA2 containing complex (BRCC), which also contains BRCA1, BRCA2, BARD1, BABAM2 and RAD51. BRCC is a ubiquitin E3 ligase complex that enhances cellular survival following DNA damage. Interacts with BRCA1. Binds polyubiquitin. Interacts with PWWP2B. Interacts with HDAC1; this interaction is enhanced in the presence of PWWP2B. Zn(2+) serves as cofactor.

Its subcellular location is the nucleus. It is found in the cytoplasm. It localises to the cytoskeleton. The protein resides in the spindle pole. In terms of biological role, metalloprotease that specifically cleaves 'Lys-63'-linked polyubiquitin chains. Does not have activity toward 'Lys-48'-linked polyubiquitin chains. Component of the BRCA1-A complex, a complex that specifically recognizes 'Lys-63'-linked ubiquitinated histones H2A and H2AX at DNA lesions sites, leading to target the BRCA1-BARD1 heterodimer to sites of DNA damage at double-strand breaks (DSBs). In the BRCA1-A complex, it specifically removes 'Lys-63'-linked ubiquitin on histones H2A and H2AX, antagonizing the RNF8-dependent ubiquitination at double-strand breaks (DSBs). Catalytic subunit of the BRISC complex, a multiprotein complex that specifically cleaves 'Lys-63'-linked ubiquitin in various substrates. Mediates the specific 'Lys-63'-specific deubiquitination associated with the COP9 signalosome complex (CSN), via the interaction of the BRISC complex with the CSN complex. The BRISC complex is required for normal mitotic spindle assembly and microtubule attachment to kinetochores via its role in deubiquitinating NUMA1. Plays a role in interferon signaling via its role in the deubiquitination of the interferon receptor IFNAR1; deubiquitination increases IFNAR1 activity by enhancing its stability and cell surface expression. Acts as a regulator of the NLRP3 inflammasome by mediating deubiquitination of NLRP3, leading to NLRP3 inflammasome assembly. Down-regulates the response to bacterial lipopolysaccharide (LPS) via its role in IFNAR1 deubiquitination. Deubiquitinates HDAC1 and PWWP2B leading to their stabilization. This Pongo abelii (Sumatran orangutan) protein is Lys-63-specific deubiquitinase BRCC36 (BRCC3).